Reading from the N-terminus, the 365-residue chain is Carboxynorspermidine/carboxyspermidine decarboxylase (365 aa).

K37 is subject to N6-(pyridoxal phosphate)lysine. Substrate is bound by residues E233 and D269.

The protein belongs to the Orn/Lys/Arg decarboxylase class-II family. NspC subfamily. As to quaternary structure, homodimer. Pyridoxal 5'-phosphate is required as a cofactor.

The protein resides in the cytoplasm. It catalyses the reaction carboxynorspermidine + H(+) = norspermidine + CO2. It carries out the reaction carboxyspermidine + H(+) = spermidine + CO2. In terms of biological role, catalyzes the decarboxylation of carboxynorspermidine and carboxyspermidine. The polypeptide is Carboxynorspermidine/carboxyspermidine decarboxylase (Herminiimonas arsenicoxydans).